The sequence spans 265 residues: Shikimate dehydrogenase (NADP(+)) (265 aa).

Shikimate contacts are provided by residues 15-17 (SLS) and Thr62. Catalysis depends on Lys66, which acts as the Proton acceptor. Glu78 is a binding site for NADP(+). Positions 87 and 102 each coordinate shikimate. Residues 126–130 (GAGGV), 150–155 (NRTELK), and Val210 contribute to the NADP(+) site. Tyr212 is a binding site for shikimate. Residue Gly233 participates in NADP(+) binding.

Belongs to the shikimate dehydrogenase family. In terms of assembly, homodimer.

It catalyses the reaction shikimate + NADP(+) = 3-dehydroshikimate + NADPH + H(+). Its pathway is metabolic intermediate biosynthesis; chorismate biosynthesis; chorismate from D-erythrose 4-phosphate and phosphoenolpyruvate: step 4/7. In terms of biological role, involved in the biosynthesis of the chorismate, which leads to the biosynthesis of aromatic amino acids. Catalyzes the reversible NADPH linked reduction of 3-dehydroshikimate (DHSA) to yield shikimate (SA). The sequence is that of Shikimate dehydrogenase (NADP(+)) from Pelagibacter ubique (strain HTCC1062).